The following is a 61-amino-acid chain: uncharacterized protein (61 aa).

This is an uncharacterized protein from Acidianus convivator (ATV).